Consider the following 717-residue polypeptide: Delta-1-pyrroline-5-carboxylate synthase (717 aa).

Residues 1 to 296 (MDAVDSTRAF…WAPVGDVGAR (296 aa)) form a glutamate 5-kinase region. Substrate is bound by residues Ser-60, Asp-157, and Asn-176. Residues 196–197 (SD) and 236–242 (RGGMTAK) each bind ATP. Residues 297–717 (DMAVAARESS…YTHKDLTSHA (421 aa)) are gamma-glutamyl phosphate reductase.

This sequence in the N-terminal section; belongs to the glutamate 5-kinase family. In the C-terminal section; belongs to the gamma-glutamyl phosphate reductase family. As to expression, expressed at high levels in leaves and is inducible in roots subjected to salt stress.

It catalyses the reaction L-glutamate + ATP = L-glutamyl 5-phosphate + ADP. The enzyme catalyses L-glutamate 5-semialdehyde + phosphate + NADP(+) = L-glutamyl 5-phosphate + NADPH + H(+). Its pathway is amino-acid biosynthesis; L-proline biosynthesis; L-glutamate 5-semialdehyde from L-glutamate: step 1/2. It functions in the pathway amino-acid biosynthesis; L-proline biosynthesis; L-glutamate 5-semialdehyde from L-glutamate: step 2/2. Feedback regulated by proline. In terms of biological role, P5CS plays a key role in proline biosynthesis, leading to osmoregulation in plants. This is Delta-1-pyrroline-5-carboxylate synthase from Actinidia deliciosa (Kiwi).